We begin with the raw amino-acid sequence, 142 residues long: Large ribosomal subunit protein uL22c (142 aa).

This sequence belongs to the universal ribosomal protein uL22 family. Part of the 50S ribosomal subunit.

It is found in the plastid. It localises to the chloroplast. Its function is as follows. This protein binds specifically to 23S rRNA. The globular domain of the protein is located near the polypeptide exit tunnel on the outside of the subunit, while an extended beta-hairpin is found that lines the wall of the exit tunnel in the center of the 70S ribosome. The chain is Large ribosomal subunit protein uL22c (rpl22) from Picea abies (Norway spruce).